Here is a 494-residue protein sequence, read N- to C-terminus: Ribose import ATP-binding protein RbsA (494 aa).

2 ABC transporter domains span residues 2–239 and 251–493; these read IDMR…VGRQ and IGEE…TGGN. 34 to 41 is an ATP binding site; it reads GENGAGKS.

This sequence belongs to the ABC transporter superfamily. Ribose importer (TC 3.A.1.2.1) family. As to quaternary structure, the complex is composed of an ATP-binding protein (RbsA), two transmembrane proteins (RbsC) and a solute-binding protein (RbsB).

It is found in the cell membrane. The catalysed reaction is D-ribose(out) + ATP + H2O = D-ribose(in) + ADP + phosphate + H(+). Its function is as follows. Part of the ABC transporter complex RbsABC involved in ribose import. Responsible for energy coupling to the transport system. This chain is Ribose import ATP-binding protein RbsA, found in Geobacillus kaustophilus (strain HTA426).